A 120-amino-acid polypeptide reads, in one-letter code: Large ribosomal subunit protein uL18 (120 aa).

It belongs to the universal ribosomal protein uL18 family. Part of the 50S ribosomal subunit; part of the 5S rRNA/L5/L18/L25 subcomplex. Contacts the 5S and 23S rRNAs.

This is one of the proteins that bind and probably mediate the attachment of the 5S RNA into the large ribosomal subunit, where it forms part of the central protuberance. In Bartonella henselae (strain ATCC 49882 / DSM 28221 / CCUG 30454 / Houston 1) (Rochalimaea henselae), this protein is Large ribosomal subunit protein uL18.